A 115-amino-acid chain; its full sequence is Con-Ins T2 (115 aa).

A signal peptide spans 1 to 21; that stretch reads MTTSFYFLLVALGLLLYVCQS. Residues 22 to 29 constitute a propeptide that is removed on maturation; sequence SFGNQHTR. Disulfide bonds link Cys-38–Cys-101, Cys-50–Cys-114, and Cys-100–Cys-105. Glu-48 bears the 4-carboxyglutamate mark. A propeptide spans 53–94 (c peptide); it reads KRNDAGKKRGQASPLWQRGGSLSMLKARAKRNEAFHLQRAHR. Glu-98 carries the 4-carboxyglutamate modification. At Glu-109 the chain carries 4-carboxyglutamate. At Cys-114 the chain carries Cysteine amide.

The protein belongs to the insulin family. In terms of assembly, heterodimer of A and B chains; disulfide-linked. As to expression, expressed by the venom gland.

It localises to the secreted. This venom insulin facilitates prey capture by rapidly inducing hypoglycemic shock. It is one of the smallest known insulin found in nature and lacks the C-terminal segment of the B chain that, in human insulin, mediates engagement of the insulin receptor (INSR) and assembly of the hormone's hexameric storage form. Despite lacking this segment, it both binds and activates human insulin receptor (long isoform (HIR-B)) with a high potency (EC(50)=15.5 nM). In vivo, intraperitoneal injection of this peptide into zebrafish lowers blood glucose with a lower potency than human insulin. In addition, when applied to water, this peptide reduces overall locomotor activity of zebrafish larvae, observed as a significant decrease in the percentage of time spent swimming and movement frequency. When tested on a mouse model of diabetes, this insulin also lowers blood glucose with a 10-fold lower potency than human insulin. The polypeptide is Con-Ins T2 (Conus tulipa (Fish-hunting cone snail)).